The following is a 130-amino-acid chain: Small ribosomal subunit protein uS8 (130 aa).

This sequence belongs to the universal ribosomal protein uS8 family. As to quaternary structure, part of the 30S ribosomal subunit. Contacts proteins S5 and S12.

One of the primary rRNA binding proteins, it binds directly to 16S rRNA central domain where it helps coordinate assembly of the platform of the 30S subunit. This chain is Small ribosomal subunit protein uS8, found in Photorhabdus laumondii subsp. laumondii (strain DSM 15139 / CIP 105565 / TT01) (Photorhabdus luminescens subsp. laumondii).